We begin with the raw amino-acid sequence, 600 residues long: Methionine--tRNA ligase (600 aa).

A 'HIGH' region motif is present at residues 11-21 (PYANGPRHIGH). Residues Cys-143, Cys-146, Cys-156, and Cys-159 each contribute to the Zn(2+) site. Residues 351–355 (KFSSS) carry the 'KMSKS' region motif. Ser-354 provides a ligand contact to ATP.

This sequence belongs to the class-I aminoacyl-tRNA synthetase family. MetG type 1 subfamily. In terms of assembly, monomer. Requires Zn(2+) as cofactor.

It is found in the cytoplasm. The enzyme catalyses tRNA(Met) + L-methionine + ATP = L-methionyl-tRNA(Met) + AMP + diphosphate. In terms of biological role, is required not only for elongation of protein synthesis but also for the initiation of all mRNA translation through initiator tRNA(fMet) aminoacylation. The polypeptide is Methionine--tRNA ligase (Salinispora arenicola (strain CNS-205)).